We begin with the raw amino-acid sequence, 496 residues long: Cyclin-dependent kinase 16 (496 aa).

Residues 1 to 95 (MDRMKKIKRQ…SATSSDEVQS (95 aa)) are disordered. S12 is subject to Phosphoserine; by BRSK2. S36, S42, S64, S65, S78, S82, and S89 each carry phosphoserine. Positions 69–78 (IVHEDMKMGS) are enriched in basic and acidic residues. Positions 83 to 93 (DQASATSSDEV) are enriched in polar residues. A Phosphoserine; by CDK5 modification is found at S95. S110, S119, S138, S146, S153, and S155 each carry phosphoserine. Residues 165 to 446 (YIKLDKLGEG…AEDARKHPFF (282 aa)) form the Protein kinase domain. Residues 171–179 (LGEGTYATV) and K194 contribute to the ATP site. T175 carries the phosphothreonine modification. The active-site Proton acceptor is the D286. T380 bears the Phosphothreonine mark. 3 positions are modified to phosphoserine: S391, S478, and S480.

The protein belongs to the protein kinase superfamily. CMGC Ser/Thr protein kinase family. CDC2/CDKX subfamily. As to quaternary structure, found in a complex containing CABLES1, CDK17 and TDRD7. Interacts with BRSK2. Identified in a complex with NSF, syntaxin-1, synaptotagmin, SYN1, SYP and CDK5R1. Interacts with YWHAH, YWHAQ and YWHAZ. Interacts with CCNY; this interaction increases the CDK16 kinase activity. Interacts with CCNYL1; this interaction mutually increases the stability of CDK16 and CCNYL1 and increases the kinase activity of CDK16. Interacts with NSF. Phosphorylation of CDK16 is essential for the binding of CCNY, but also essential for the regulation of CDK16 kinase activity. Phosphorylation of CDK16 is essential for the binding of CCNYl1, but also essential for the regulation of CDK16 kinase activity. Ser-146 and Ser-153 are the critical sites for the binding of CCNYL1 and for modulating CDK16 kinase activity. Phosphorylation at Ser-153 inhibits kinase activity. Highly expressed in testis and brain, and detected at lower levels in heart, skeletal muscle, adipose tissue, lung, spleen and pancreas (at protein level). Ubiquitous with highest levels in testis and brain, with longer form predominant in all tissues except the testis.

It localises to the cytoplasm. Its subcellular location is the cytoplasmic vesicle. The protein resides in the secretory vesicle. The protein localises to the cell membrane. It is found in the synapse. It localises to the synaptosome. It catalyses the reaction L-seryl-[protein] + ATP = O-phospho-L-seryl-[protein] + ADP + H(+). The enzyme catalyses L-threonyl-[protein] + ATP = O-phospho-L-threonyl-[protein] + ADP + H(+). Its function is as follows. Protein kinase that plays a role in vesicle-mediated transport processes and exocytosis. Can phosphorylate CCNY at 'Ser-336' (in vitro). Plays a role in the regulation of insulin secretion in response to changes in blood glucose levels. Regulates GH1 release by brain neurons. Phosphorylates NSF, and thereby regulates NSF oligomerization. Required for normal spermatogenesis. Regulates neuron differentiation and dendrite development. In Mus musculus (Mouse), this protein is Cyclin-dependent kinase 16 (Cdk16).